The following is a 223-amino-acid chain: Probable GTP-binding protein EngB (223 aa).

Positions 25-199 (TGVEIAFAGR…SRLLQDWFDE (175 aa)) constitute an EngB-type G domain. GTP-binding positions include 33–40 (GRSNAGKS), 60–64 (GRTQH), 78–81 (DLPG), 145–148 (TKAD), and 178–180 (FSS). Residues S40 and T62 each contribute to the Mg(2+) site.

The protein belongs to the TRAFAC class TrmE-Era-EngA-EngB-Septin-like GTPase superfamily. EngB GTPase family. Mg(2+) is required as a cofactor.

In terms of biological role, necessary for normal cell division and for the maintenance of normal septation. This Nitrosomonas eutropha (strain DSM 101675 / C91 / Nm57) protein is Probable GTP-binding protein EngB.